A 311-amino-acid chain; its full sequence is Probable dihydroorotate dehydrogenase A (fumarate) (311 aa).

FMN is bound by residues Ser20 and 44 to 45; that span reads KT. Substrate-binding positions include Lys44, 68 to 72, and Asn127; that span reads NSMGL. Asn127 contacts FMN. The Nucleophile role is filled by Cys130. Residues Lys164 and Ile192 each contribute to the FMN site. 193-194 contributes to the substrate binding site; it reads NS. Residues Gly221, 249–250, and 271–272 contribute to the FMN site; these read GG and GT.

This sequence belongs to the dihydroorotate dehydrogenase family. Type 1 subfamily. In terms of assembly, homodimer. It depends on FMN as a cofactor.

Its subcellular location is the cytoplasm. It catalyses the reaction (S)-dihydroorotate + fumarate = orotate + succinate. It participates in pyrimidine metabolism; UMP biosynthesis via de novo pathway. Catalyzes the conversion of dihydroorotate to orotate with fumarate as the electron acceptor. This chain is Probable dihydroorotate dehydrogenase A (fumarate) (pyrDA), found in Enterococcus faecalis (strain ATCC 700802 / V583).